We begin with the raw amino-acid sequence, 390 residues long: RNA binding protein fox-1 homolog 2 (390 aa).

The disordered stretch occupies residues 1–127 (MQNEPLTPGY…STPKRLHVSN (127 aa)). Composition is skewed to polar residues over residues 18–28 (SQGNQEPTTTP) and 65–95 (GEHN…SLTT). H67 carries the phosphothreonine modification. Low complexity predominate over residues 97 to 117 (GGAQTDGQQSQTQSSENSESK). The 77-residue stretch at 121 to 197 (KRLHVSNIPF…RKIEVNNATA (77 aa)) folds into the RRM domain. An omega-N-methylarginine mark is found at G249, G267, F268, A277, and R281. R297 and R329 each carry asymmetric dimethylarginine. R381 and R386 each carry asymmetric dimethylarginine; alternate. 2 positions are modified to omega-N-methylarginine; alternate: R381 and R386.

As to quaternary structure, interacts with ER-alpha N-terminal activation domain. Interacts with RBPMS; the interaction allows cooperative assembly of stable cell-specific alternative splicing regulatory complexes.

Its subcellular location is the nucleus. It is found in the cytoplasm. Its function is as follows. RNA-binding protein that regulates alternative splicing events by binding to 5'-UGCAUGU-3' elements. Prevents binding of U2AF2 to the 3'-splice site. Regulates alternative splicing of tissue-specific exons and of differentially spliced exons during erythropoiesis. RNA-binding protein that seems to act as a coregulatory factor of ER-alpha. Together with RNA binding proteins RBPMS and MBNL1/2, activates vascular smooth muscle cells alternative splicing events. This chain is RNA binding protein fox-1 homolog 2 (RBFOX2), found in Homo sapiens (Human).